Reading from the N-terminus, the 95-residue chain is Small ribosomal subunit protein bS6 (95 aa).

Belongs to the bacterial ribosomal protein bS6 family.

Its function is as follows. Binds together with bS18 to 16S ribosomal RNA. This Onion yellows phytoplasma (strain OY-M) protein is Small ribosomal subunit protein bS6.